Here is a 219-residue protein sequence, read N- to C-terminus: Phosphatidylserine decarboxylase proenzyme (219 aa).

S182 acts as the Schiff-base intermediate with substrate; via pyruvic acid in catalysis. S182 is modified (pyruvic acid (Ser); by autocatalysis).

It belongs to the phosphatidylserine decarboxylase family. PSD-A subfamily. As to quaternary structure, heterodimer of a large membrane-associated beta subunit and a small pyruvoyl-containing alpha subunit. Pyruvate serves as cofactor. Is synthesized initially as an inactive proenzyme. Formation of the active enzyme involves a self-maturation process in which the active site pyruvoyl group is generated from an internal serine residue via an autocatalytic post-translational modification. Two non-identical subunits are generated from the proenzyme in this reaction, and the pyruvate is formed at the N-terminus of the alpha chain, which is derived from the carboxyl end of the proenzyme. The post-translation cleavage follows an unusual pathway, termed non-hydrolytic serinolysis, in which the side chain hydroxyl group of the serine supplies its oxygen atom to form the C-terminus of the beta chain, while the remainder of the serine residue undergoes an oxidative deamination to produce ammonia and the pyruvoyl prosthetic group on the alpha chain.

It localises to the cell membrane. The catalysed reaction is a 1,2-diacyl-sn-glycero-3-phospho-L-serine + H(+) = a 1,2-diacyl-sn-glycero-3-phosphoethanolamine + CO2. Its pathway is phospholipid metabolism; phosphatidylethanolamine biosynthesis; phosphatidylethanolamine from CDP-diacylglycerol: step 2/2. Its function is as follows. Catalyzes the formation of phosphatidylethanolamine (PtdEtn) from phosphatidylserine (PtdSer). The sequence is that of Phosphatidylserine decarboxylase proenzyme from Chlorobium phaeovibrioides (strain DSM 265 / 1930) (Prosthecochloris vibrioformis (strain DSM 265)).